A 215-amino-acid polypeptide reads, in one-letter code: Pyridoxine/pyridoxamine 5'-phosphate oxidase (215 aa).

Substrate is bound by residues 9-12 (RREY) and Lys-69. Residues 64–69 (RILLLK), 79–80 (FT), Lys-86, and Gln-108 contribute to the FMN site. Tyr-126, Arg-130, and Ser-134 together coordinate substrate. FMN contacts are provided by residues 143-144 (QS) and Trp-188. 194–196 (RLH) contributes to the substrate binding site. Residue Arg-198 coordinates FMN.

Belongs to the pyridoxamine 5'-phosphate oxidase family. As to quaternary structure, homodimer. The cofactor is FMN.

The catalysed reaction is pyridoxamine 5'-phosphate + O2 + H2O = pyridoxal 5'-phosphate + H2O2 + NH4(+). The enzyme catalyses pyridoxine 5'-phosphate + O2 = pyridoxal 5'-phosphate + H2O2. Its pathway is cofactor metabolism; pyridoxal 5'-phosphate salvage; pyridoxal 5'-phosphate from pyridoxamine 5'-phosphate: step 1/1. It functions in the pathway cofactor metabolism; pyridoxal 5'-phosphate salvage; pyridoxal 5'-phosphate from pyridoxine 5'-phosphate: step 1/1. Its function is as follows. Catalyzes the oxidation of either pyridoxine 5'-phosphate (PNP) or pyridoxamine 5'-phosphate (PMP) into pyridoxal 5'-phosphate (PLP). In Pseudomonas paraeruginosa (strain DSM 24068 / PA7) (Pseudomonas aeruginosa (strain PA7)), this protein is Pyridoxine/pyridoxamine 5'-phosphate oxidase.